The following is a 336-amino-acid chain: Phosphoribosylformylglycinamidine cyclo-ligase (336 aa).

It belongs to the AIR synthase family.

It is found in the cytoplasm. The catalysed reaction is 2-formamido-N(1)-(5-O-phospho-beta-D-ribosyl)acetamidine + ATP = 5-amino-1-(5-phospho-beta-D-ribosyl)imidazole + ADP + phosphate + H(+). It functions in the pathway purine metabolism; IMP biosynthesis via de novo pathway; 5-amino-1-(5-phospho-D-ribosyl)imidazole from N(2)-formyl-N(1)-(5-phospho-D-ribosyl)glycinamide: step 2/2. The protein is Phosphoribosylformylglycinamidine cyclo-ligase of Thermoanaerobacter pseudethanolicus (strain ATCC 33223 / 39E) (Clostridium thermohydrosulfuricum).